Here is a 172-residue protein sequence, read N- to C-terminus: MIKLTQILTEVPSVDAKVCLTMVQRTKSRLRIVLEDGQDAGLLLPRGHILHHGSLLSTDDGFVVEVVAAKEQVSTARSDNPTLFAKGCYHLGNRHVPLQVEAGWCRYQHDYVLDEMLIGLGLQVTVENEAFQPEAGAYGGTTGGHSHGDAYDDSLEKASHEHAHGHPHKHEH.

This sequence belongs to the UreE family.

It is found in the cytoplasm. Involved in urease metallocenter assembly. Binds nickel. Probably functions as a nickel donor during metallocenter assembly. This chain is Urease accessory protein UreE, found in Shewanella halifaxensis (strain HAW-EB4).